The sequence spans 693 residues: Histone-lysine N-methyltransferase, H3 lysine-9 specific SUVH7 (693 aa).

2 disordered regions span residues 64 to 99 (WYDGDAGPSSTGPIKREASDNTNDTAHNTFAPPPEM) and 111 to 175 (DSSN…AETE). The segment at residues 129–141 (KRGRGRPKGSKNS) is a DNA-binding region (a.T hook). The region spanning 227–373 (GAVPGIHVGD…FKEFRFKLVR (147 aa)) is the YDG domain. Residues 454 to 516 (QSLGCQNCRH…HCPTRLVQTG (63 aa)) form the Pre-SET domain. 9 residues coordinate Zn(2+): cysteine 458, cysteine 461, cysteine 466, cysteine 471, cysteine 473, cysteine 498, cysteine 502, cysteine 504, and cysteine 508. In terms of domain architecture, SET spans 519-660 (LHLEVFKTRN…PMTELTYDYG (142 aa)). S-adenosyl-L-methionine-binding positions include 529–531 (CGW), aspartate 562, tyrosine 564, arginine 614, and 617–618 (NH). Zn(2+)-binding residues include cysteine 620, cysteine 681, cysteine 683, and cysteine 688. One can recognise a Post-SET domain in the interval 677-693 (GKKTCLCGSVKCRGSFT).

This sequence belongs to the class V-like SAM-binding methyltransferase superfamily. Histone-lysine methyltransferase family. Suvar3-9 subfamily.

The protein resides in the nucleus. It is found in the chromosome. It localises to the centromere. The enzyme catalyses N(6)-methyl-L-lysyl(9)-[histone H3] + S-adenosyl-L-methionine = N(6),N(6)-dimethyl-L-lysyl(9)-[histone H3] + S-adenosyl-L-homocysteine + H(+). It catalyses the reaction L-lysyl(9)-[histone H3] + S-adenosyl-L-methionine = N(6)-methyl-L-lysyl(9)-[histone H3] + S-adenosyl-L-homocysteine + H(+). In terms of biological role, histone methyltransferase. Methylates 'Lys-9' of histone H3. H3 'Lys-9' methylation represents a specific tag for epigenetic transcriptional repression. The chain is Histone-lysine N-methyltransferase, H3 lysine-9 specific SUVH7 (SUVH7) from Arabidopsis thaliana (Mouse-ear cress).